The sequence spans 119 residues: Acidic phospholipase A2 CM-II (119 aa).

Residues Y25, G27, and G29 each coordinate Ca(2+). The active site involves H45. D46 is a binding site for Ca(2+). D87 is an active-site residue.

This sequence belongs to the phospholipase A2 family. Group II subfamily. D49 sub-subfamily. The cofactor is Ca(2+). Post-translationally, contains 6 disulfide bonds. In terms of tissue distribution, expressed by the venom gland.

It localises to the secreted. It carries out the reaction a 1,2-diacyl-sn-glycero-3-phosphocholine + H2O = a 1-acyl-sn-glycero-3-phosphocholine + a fatty acid + H(+). Its function is as follows. PLA2 catalyzes the calcium-dependent hydrolysis of the 2-acyl groups in 3-sn-phosphoglycerides. This chain is Acidic phospholipase A2 CM-II, found in Bitis nasicornis (Rhinoceros adder).